We begin with the raw amino-acid sequence, 439 residues long: Ribulose bisphosphate carboxylase/oxygenase activase 2, chloroplastic (439 aa).

Residues 1–58 (MATSVSTIGAANKAPLSLNNSVAGTSVPSTAFFGKTLKKVYGKGVSSPKVTNRSLRIA) constitute a chloroplast transit peptide. 169–176 (GGKGQGKS) serves as a coordination point for ATP.

This sequence belongs to the RuBisCO activase family.

It is found in the plastid. The protein localises to the chloroplast stroma. Functionally, activation of RuBisCO (ribulose-1,5-bisphosphate carboxylase/oxygenase; EC 4.1.1.39) involves the ATP-dependent carboxylation of the epsilon-amino group of lysine leading to a carbamate structure. The chain is Ribulose bisphosphate carboxylase/oxygenase activase 2, chloroplastic (RCA) from Nicotiana tabacum (Common tobacco).